The chain runs to 228 residues: ATP-dependent dethiobiotin synthetase BioD (228 aa).

14–19 contributes to the ATP binding site; that stretch reads DAGKTL. T18 serves as a coordination point for Mg(2+). K39 is an active-site residue. Residues D56, 117–120, and 206–208 contribute to the ATP site; these read EGAG and PRL. Mg(2+) is bound by residues D56 and E117.

Belongs to the dethiobiotin synthetase family. In terms of assembly, homodimer. Mg(2+) serves as cofactor.

It is found in the cytoplasm. It catalyses the reaction (7R,8S)-7,8-diammoniononanoate + CO2 + ATP = (4R,5S)-dethiobiotin + ADP + phosphate + 3 H(+). It functions in the pathway cofactor biosynthesis; biotin biosynthesis; biotin from 7,8-diaminononanoate: step 1/2. In terms of biological role, catalyzes a mechanistically unusual reaction, the ATP-dependent insertion of CO2 between the N7 and N8 nitrogen atoms of 7,8-diaminopelargonic acid (DAPA, also called 7,8-diammoniononanoate) to form a ureido ring. This chain is ATP-dependent dethiobiotin synthetase BioD, found in Cellvibrio japonicus (strain Ueda107) (Pseudomonas fluorescens subsp. cellulosa).